Consider the following 160-residue polypeptide: Protein Bel-3 (160 aa).

As to quaternary structure, homodimer.

It is found in the host cytoplasm. The sequence is that of Protein Bel-3 (bel3) from Human spumaretrovirus (SFVcpz(hu)).